The sequence spans 258 residues: Insulin-like growth factor-binding protein 4 (258 aa).

An N-terminal signal peptide occupies residues 1–21 (MLSLCLMAALLLAAGPGPSLG). In terms of domain architecture, IGFBP N-terminal spans 23-103 (EAIHCPPCSE…VHGQGVCMEL (81 aa)). Intrachain disulfides connect C27–C53, C30–C55, C38–C56, C44–C59, C67–C80, and C74–C100. The N-linked (GlcNAc...) asparagine glycan is linked to N125. 4 disulfides stabilise this stretch: C131–C138, C174–C204, C215–C226, and C228–C249. The Thyroglobulin type-1 domain occupies 171-249 (QGSCQSELHR…GLEPKGELDC (79 aa)). Position 255 is a phosphoserine (S255).

In terms of assembly, binds IGF2 more than IGF1.

The protein resides in the secreted. Its function is as follows. IGF-binding proteins prolong the half-life of the IGFs and have been shown to either inhibit or stimulate the growth promoting effects of the IGFs on cell culture. They alter the interaction of IGFs with their cell surface receptors. In Bos taurus (Bovine), this protein is Insulin-like growth factor-binding protein 4 (IGFBP4).